The primary structure comprises 160 residues: MLRHLPSRLPVKMWGRTLEKQSWRDSSQTPPPCLIRRLDHIVMTVKSIKDTTMFYSKILGMEVMTFKEDRKALCFGDQKFNLHEVGKEFEPKAAHPVPGSLDICLITEVPLEEMIQHLKACDVPIEEGPVPRTGAKGPIMSIYFRDPDRNLIEVSNYISS.

The VOC domain maps to 37-157; sequence RLDHIVMTVK…DRNLIEVSNY (121 aa).

It belongs to the glyoxalase I family.

In Homo sapiens (Human), this protein is Glyoxalase domain-containing protein 5 (GLOD5).